A 231-amino-acid polypeptide reads, in one-letter code: Flagellar L-ring protein (231 aa).

The first 18 residues, 1-18, serve as a signal peptide directing secretion; sequence MSRLLIVVSLSSAFALAG. Residue C19 is the site of N-palmitoyl cysteine attachment. C19 carries S-diacylglycerol cysteine lipidation.

Belongs to the FlgH family. In terms of assembly, the basal body constitutes a major portion of the flagellar organelle and consists of four rings (L,P,S, and M) mounted on a central rod.

The protein localises to the cell outer membrane. It is found in the bacterial flagellum basal body. In terms of biological role, assembles around the rod to form the L-ring and probably protects the motor/basal body from shearing forces during rotation. The chain is Flagellar L-ring protein from Stutzerimonas stutzeri (strain A1501) (Pseudomonas stutzeri).